We begin with the raw amino-acid sequence, 300 residues long: Transcription initiation factor IIB (300 aa).

The TFIIB-type zinc-finger motif lies at 2-34; sequence NKQKVCPACESAELIYDPERGEIVCAKCGYVIE. Zn(2+)-binding residues include cysteine 7, cysteine 10, cysteine 26, and cysteine 29. Repeat copies occupy residues 114–197 and 210–291.

The protein belongs to the TFIIB family.

Its function is as follows. Stabilizes TBP binding to an archaeal box-A promoter. Also responsible for recruiting RNA polymerase II to the pre-initiation complex (DNA-TBP-TFIIB). The protein is Transcription initiation factor IIB of Pyrococcus furiosus (strain ATCC 43587 / DSM 3638 / JCM 8422 / Vc1).